The following is a 109-amino-acid chain: Glutaredoxin-C13 (109 aa).

A Glutaredoxin domain is found at 2 to 108; sequence AEMVARLASE…PMLKNAGALW (107 aa). Residues Cys22 and Cys25 are joined by a disulfide bond. The short motif at 106–109 is the Responsive for interaction with TGA factors element; the sequence is ALWL.

It belongs to the glutaredoxin family. CC-type subfamily.

The protein localises to the cytoplasm. It localises to the nucleus. Functionally, has a glutathione-disulfide oxidoreductase activity in the presence of NADPH and glutathione reductase. Reduces low molecular weight disulfides and proteins. This chain is Glutaredoxin-C13 (GRXC13), found in Oryza sativa subsp. japonica (Rice).